Reading from the N-terminus, the 475-residue chain is ATP-dependent protease ATPase subunit HslU1 (475 aa).

The N-terminal 27 residues, 1–27 (MMRRVTSSLPSALKLGRSLGPNVRFSG), are a transit peptide targeting the mitochondrion. ATP contacts are provided by residues isoleucine 66, 108-113 (GVGKTE), aspartate 286, glutamate 353, and arginine 425.

The protein belongs to the ClpX chaperone family. HslU subfamily. As to quaternary structure, a double ring-shaped homohexamer of HslV is capped on each side by a ring-shaped HslU homohexamer. The assembly of the HslU/HslV complex (HslVU) is dependent on binding of ATP.

The protein localises to the mitochondrion matrix. The protein resides in the kinetoplast. Its function is as follows. ATPase subunit of a proteasome-like degradation complex; this subunit has chaperone activity. The binding of ATP and its subsequent hydrolysis by HslU are essential for unfolding of protein substrates subsequently hydrolyzed by HslV. HslU recognizes the N-terminal part of its protein substrates and unfolds these before they are guided to HslV for hydrolysis. The HslVU protease complex functions in mitochondrial DNA replication by regulating DNA helicase PIF2 protein levels. This is ATP-dependent protease ATPase subunit HslU1 (HslU1) from Trypanosoma brucei brucei (strain 927/4 GUTat10.1).